Consider the following 363-residue polypeptide: Chorismate synthase (363 aa).

2 residues coordinate NADP(+): Arg48 and Arg54. FMN-binding positions include 125–127 (RSS), 237–238 (NA), Gly277, 292–296 (KPTSS), and Arg318.

Belongs to the chorismate synthase family. As to quaternary structure, homotetramer. Requires FMNH2 as cofactor.

The catalysed reaction is 5-O-(1-carboxyvinyl)-3-phosphoshikimate = chorismate + phosphate. It functions in the pathway metabolic intermediate biosynthesis; chorismate biosynthesis; chorismate from D-erythrose 4-phosphate and phosphoenolpyruvate: step 7/7. Functionally, catalyzes the anti-1,4-elimination of the C-3 phosphate and the C-6 proR hydrogen from 5-enolpyruvylshikimate-3-phosphate (EPSP) to yield chorismate, which is the branch point compound that serves as the starting substrate for the three terminal pathways of aromatic amino acid biosynthesis. This reaction introduces a second double bond into the aromatic ring system. The sequence is that of Chorismate synthase from Stutzerimonas stutzeri (strain A1501) (Pseudomonas stutzeri).